Here is a 474-residue protein sequence, read N- to C-terminus: PRAME family member 17 (474 aa).

The stretch at Arg97–Cys124 is one LRR 1; degenerate repeat. One copy of the LRR 2; degenerate repeat lies at His179–Tyr203. An LRR 3; degenerate repeat occupies Pro204–Gln230. The LRR 4; degenerate repeat unit spans residues Met231 to Cys265. 5 LRR repeats span residues Leu266–Leu291, Lys292–Lys323, Glu324–Ala342, Ala348–Arg375, and Cys376–His400.

Belongs to the PRAME family.

This chain is PRAME family member 17, found in Homo sapiens (Human).